A 328-amino-acid polypeptide reads, in one-letter code: DNA-directed RNA polymerase subunit alpha (328 aa).

Positions 1–234 are alpha N-terminal domain (alpha-NTD); it reads MVREKVKVST…DLFIPFLQAE (234 aa). Residues 268–328 form an alpha C-terminal domain (alpha-CTD) region; it reads IALKSIFIDQ…KQIMSILEKK (61 aa).

This sequence belongs to the RNA polymerase alpha chain family. In plastids the minimal PEP RNA polymerase catalytic core is composed of four subunits: alpha, beta, beta', and beta''. When a (nuclear-encoded) sigma factor is associated with the core the holoenzyme is formed, which can initiate transcription.

The protein localises to the plastid. Its subcellular location is the chloroplast. It carries out the reaction RNA(n) + a ribonucleoside 5'-triphosphate = RNA(n+1) + diphosphate. Functionally, DNA-dependent RNA polymerase catalyzes the transcription of DNA into RNA using the four ribonucleoside triphosphates as substrates. The polypeptide is DNA-directed RNA polymerase subunit alpha (Citrus sinensis (Sweet orange)).